A 518-amino-acid chain; its full sequence is Transcription factor TT8 (518 aa).

Coiled-coil stretches lie at residues 220-240 and 405-428; these read EVHE…MSEE and VNHL…KRTR. Residues 359 to 408 enclose the bHLH domain; the sequence is REDLSHVVAERRRREKLNEKFITLRSMVPFVTKMDKVSILGDTIAYVNHL.

The protein belongs to the bHLH protein family. In terms of assembly, homodimer. Interacts with MYB4, MYB5, MYB6, MYB82, MYB113, MYB114, MYB75/PAP1, MYB90/PAP2, and TT2. Buds, flowers and developing siliques, but not in leaves, stems and roots.

The protein localises to the nucleus. Transcription activator, when associated with MYB75/PAP1 or MYB90/PAP2. Involved in the control of flavonoid pigmentation. Plays a key role in regulating leucoanthocyanidin reductase (BANYULS) and dihydroflavonol-4-reductase (DFR). Not required for leucoanthocyanidin dioxygenase (LDOX) expression. The sequence is that of Transcription factor TT8 from Arabidopsis thaliana (Mouse-ear cress).